A 983-amino-acid polypeptide reads, in one-letter code: UPF0182 protein CMM_1204 (983 aa).

Helical transmembrane passes span 16–36 (LAIT…FAGF), 56–76 (WGAG…PVFV), 108–128 (LAMF…ASSG), 161–181 (FYHA…LGVL), 205–225 (IQIA…IWLD), 255–275 (AILA…AVIG), and 281–301 (IIGT…YPAI). Residues 699–714 (QDLWTTPNDPTATTEA) are compositionally biased toward polar residues. Disordered stretches follow at residues 699-718 (QDLW…GTPA) and 884-936 (DSGA…AQDV). Residues 902 to 918 (GGTGDGATDGATDGGTG) are compositionally biased toward gly residues. The segment covering 919–933 (STPTPAPTTSPSAPA) has biased composition (low complexity).

The protein belongs to the UPF0182 family.

Its subcellular location is the cell membrane. This chain is UPF0182 protein CMM_1204, found in Clavibacter michiganensis subsp. michiganensis (strain NCPPB 382).